The following is a 141-amino-acid chain: Large ribosomal subunit protein uL11 (141 aa).

This sequence belongs to the universal ribosomal protein uL11 family. As to quaternary structure, part of the ribosomal stalk of the 50S ribosomal subunit. Interacts with L10 and the large rRNA to form the base of the stalk. L10 forms an elongated spine to which L12 dimers bind in a sequential fashion forming a multimeric L10(L12)X complex. Post-translationally, one or more lysine residues are methylated.

Functionally, forms part of the ribosomal stalk which helps the ribosome interact with GTP-bound translation factors. This chain is Large ribosomal subunit protein uL11, found in Fusobacterium nucleatum subsp. nucleatum (strain ATCC 25586 / DSM 15643 / BCRC 10681 / CIP 101130 / JCM 8532 / KCTC 2640 / LMG 13131 / VPI 4355).